Reading from the N-terminus, the 515-residue chain is ATP synthase subunit alpha (515 aa).

169–176 is an ATP binding site; that stretch reads GDRQTGKT.

This sequence belongs to the ATPase alpha/beta chains family. In terms of assembly, F-type ATPases have 2 components, CF(1) - the catalytic core - and CF(0) - the membrane proton channel. CF(1) has five subunits: alpha(3), beta(3), gamma(1), delta(1), epsilon(1). CF(0) has three main subunits: a(1), b(2) and c(9-12). The alpha and beta chains form an alternating ring which encloses part of the gamma chain. CF(1) is attached to CF(0) by a central stalk formed by the gamma and epsilon chains, while a peripheral stalk is formed by the delta and b chains.

The protein localises to the cell inner membrane. It catalyses the reaction ATP + H2O + 4 H(+)(in) = ADP + phosphate + 5 H(+)(out). Produces ATP from ADP in the presence of a proton gradient across the membrane. The alpha chain is a regulatory subunit. The polypeptide is ATP synthase subunit alpha (Neisseria meningitidis serogroup C (strain 053442)).